We begin with the raw amino-acid sequence, 178 residues long: uncharacterized protein (178 aa).

Residues 7-27 (LAIGTAILLIGMAYWTVSIVE) form a helical membrane-spanning segment.

Its subcellular location is the membrane. This is an uncharacterized protein from Methanocaldococcus jannaschii (strain ATCC 43067 / DSM 2661 / JAL-1 / JCM 10045 / NBRC 100440) (Methanococcus jannaschii).